The sequence spans 246 residues: Ly6/PLAUR domain-containing protein 4 (246 aa).

The signal sequence occupies residues 1–26 (MGPQHLSPMQLLCLLGAISSLPWAEA). Asn-117 is a glycosylation site (N-linked (GlcNAc...) asparagine). Residues 142-223 (CPTCVGEHSK…INIVEKALFT (82 aa)) form the UPAR/Ly6 domain. Residue Ala-225 is the site of GPI-anchor amidated alanine attachment. A propeptide spans 226–246 (GTPCRSPSWGILLGLLFAFKG) (removed in mature form).

It localises to the cell membrane. The protein is Ly6/PLAUR domain-containing protein 4 (LYPD4) of Bos taurus (Bovine).